Consider the following 162-residue polypeptide: ATP synthase subunit b (162 aa).

The helical transmembrane segment at 16–36 threads the bilayer; sequence GISGGTIIYQLLMFIILLALL.

Belongs to the ATPase B chain family. F-type ATPases have 2 components, F(1) - the catalytic core - and F(0) - the membrane proton channel. F(1) has five subunits: alpha(3), beta(3), gamma(1), delta(1), epsilon(1). F(0) has three main subunits: a(1), b(2) and c(10-14). The alpha and beta chains form an alternating ring which encloses part of the gamma chain. F(1) is attached to F(0) by a central stalk formed by the gamma and epsilon chains, while a peripheral stalk is formed by the delta and b chains.

The protein resides in the cell membrane. F(1)F(0) ATP synthase produces ATP from ADP in the presence of a proton or sodium gradient. F-type ATPases consist of two structural domains, F(1) containing the extramembraneous catalytic core and F(0) containing the membrane proton channel, linked together by a central stalk and a peripheral stalk. During catalysis, ATP synthesis in the catalytic domain of F(1) is coupled via a rotary mechanism of the central stalk subunits to proton translocation. Functionally, component of the F(0) channel, it forms part of the peripheral stalk, linking F(1) to F(0). The polypeptide is ATP synthase subunit b (Bacillus caldotenax).